Here is a 165-residue protein sequence, read N- to C-terminus: Phosphopantetheine adenylyltransferase (165 aa).

Substrate is bound at residue S10. ATP is bound by residues 10 to 11 and H18; that span reads SF. Substrate contacts are provided by K42, L74, and R88. Residues 89-91, E99, and 124-130 contribute to the ATP site; these read GLR and YSFISSS.

Belongs to the bacterial CoaD family. Homohexamer. Requires Mg(2+) as cofactor.

It localises to the cytoplasm. It catalyses the reaction (R)-4'-phosphopantetheine + ATP + H(+) = 3'-dephospho-CoA + diphosphate. It participates in cofactor biosynthesis; coenzyme A biosynthesis; CoA from (R)-pantothenate: step 4/5. Its function is as follows. Reversibly transfers an adenylyl group from ATP to 4'-phosphopantetheine, yielding dephospho-CoA (dPCoA) and pyrophosphate. The polypeptide is Phosphopantetheine adenylyltransferase (Macrococcus caseolyticus (strain JCSC5402) (Macrococcoides caseolyticum)).